We begin with the raw amino-acid sequence, 825 residues long: Ent-copalyl diphosphate synthase 2, chloroplastic (825 aa).

Residues 1 to 70 (MVLSSSCTTV…KGSSLTPIVR (70 aa)) constitute a chloroplast transit peptide. Position 241 (K241) interacts with substrate. The DXDD motif signature appears at 373-376 (EVDD). K459 contacts substrate.

It belongs to the terpene synthase family. Tpsc subfamily. Mg(2+) serves as cofactor. As to expression, expressed in tassels.

The protein resides in the plastid. The protein localises to the chloroplast. The catalysed reaction is (2E,6E,10E)-geranylgeranyl diphosphate = ent-copalyl diphosphate. It functions in the pathway plant hormone biosynthesis; gibberellin biosynthesis. Functionally, involved in gibberellin biosynthesis. Catalyzes the conversion of geranylgeranyl diphosphate to the gibberellin precursor ent-copalyl diphosphate (ent-CPP). Involved in the production of antifungal dolabralexin phytoalexins in response to biotic and abiotic stresses. In response to fungal infection and in associtation with KSL4, is involved in the production dolabradiene, a type of antifungal phytoalexin. This chain is Ent-copalyl diphosphate synthase 2, chloroplastic, found in Zea mays (Maize).